We begin with the raw amino-acid sequence, 746 residues long: Double-stranded RNA-specific editase B2 (746 aa).

Disordered regions lie at residues 1 to 36 (MASV…KDKV) and 50 to 105 (SPGT…PLEE). A compositionally biased stretch (basic residues) spans 20–34 (CKSKRRRRRRSKRKD). The interval 23-35 (KRRRRRRSKRKDK) is R-domain (ssRNA-binding). 2 consecutive DRBM domains span residues 126–192 (TPKN…SFVQ) and 284–348 (NPVV…ALFD). The A to I editase domain occupies 415–742 (VLSSGTKCIS…VRKPPEQDQF (328 aa)). Position 439 (histidine 439) interacts with Zn(2+). The active-site Proton donor is glutamate 441. The Zn(2+) site is built by cysteine 497 and cysteine 562.

In terms of tissue distribution, brain specific.

Its subcellular location is the nucleus. Lacks editing activity. It prevents the binding of other ADAR enzymes to targets in vitro, and decreases the efficiency of these enzymes. Capable of binding to dsRNA but also to ssRNA. The sequence is that of Double-stranded RNA-specific editase B2 (Adarb2) from Rattus norvegicus (Rat).